Here is an 88-residue protein sequence, read N- to C-terminus: Small ribosomal subunit protein uS15 (88 aa).

The protein belongs to the universal ribosomal protein uS15 family. Part of the 30S ribosomal subunit. Forms a bridge to the 50S subunit in the 70S ribosome, contacting the 23S rRNA.

Functionally, one of the primary rRNA binding proteins, it binds directly to 16S rRNA where it helps nucleate assembly of the platform of the 30S subunit by binding and bridging several RNA helices of the 16S rRNA. In terms of biological role, forms an intersubunit bridge (bridge B4) with the 23S rRNA of the 50S subunit in the ribosome. In Mycoplasmopsis synoviae (strain 53) (Mycoplasma synoviae), this protein is Small ribosomal subunit protein uS15.